Reading from the N-terminus, the 441-residue chain is Probable tRNA pseudouridine synthase D (441 aa).

The active-site Nucleophile is the D89. In terms of domain architecture, TRUD spans 168-393 (GVPNFFGVQR…SKGTRREVLL (226 aa)).

Belongs to the pseudouridine synthase TruD family.

It carries out the reaction uridine(13) in tRNA = pseudouridine(13) in tRNA. Its function is as follows. Could be responsible for synthesis of pseudouridine from uracil-13 in transfer RNAs. This is Probable tRNA pseudouridine synthase D from Methanosarcina acetivorans (strain ATCC 35395 / DSM 2834 / JCM 12185 / C2A).